Here is a 191-residue protein sequence, read N- to C-terminus: Orotate phosphoribosyltransferase (191 aa).

5-phospho-alpha-D-ribose 1-diphosphate is bound at residue 114–122 (EDVITTGGS). Residues T118 and R146 each coordinate orotate.

The protein belongs to the purine/pyrimidine phosphoribosyltransferase family. PyrE subfamily. As to quaternary structure, homodimer. The cofactor is Mg(2+).

The enzyme catalyses orotidine 5'-phosphate + diphosphate = orotate + 5-phospho-alpha-D-ribose 1-diphosphate. It participates in pyrimidine metabolism; UMP biosynthesis via de novo pathway; UMP from orotate: step 1/2. Functionally, catalyzes the transfer of a ribosyl phosphate group from 5-phosphoribose 1-diphosphate to orotate, leading to the formation of orotidine monophosphate (OMP). This chain is Orotate phosphoribosyltransferase, found in Desulforamulus reducens (strain ATCC BAA-1160 / DSM 100696 / MI-1) (Desulfotomaculum reducens).